We begin with the raw amino-acid sequence, 385 residues long: Cell division protein FtsZ (385 aa).

GTP is bound by residues 20 to 24, 107 to 109, Glu138, Arg142, and Asn186; these read GGGGN and GTG.

Belongs to the FtsZ family. In terms of assembly, homodimer. Polymerizes to form a dynamic ring structure in a strictly GTP-dependent manner. Interacts directly with several other division proteins.

Its subcellular location is the cytoplasm. Its function is as follows. Essential cell division protein that forms a contractile ring structure (Z ring) at the future cell division site. The regulation of the ring assembly controls the timing and the location of cell division. One of the functions of the FtsZ ring is to recruit other cell division proteins to the septum to produce a new cell wall between the dividing cells. Binds GTP and shows GTPase activity. The sequence is that of Cell division protein FtsZ from Buchnera aphidicola subsp. Baizongia pistaciae (strain Bp).